The sequence spans 774 residues: Ion-translocating oxidoreductase complex subunit C (774 aa).

2 consecutive 4Fe-4S ferredoxin-type domains span residues 368–398 and 408–437; these read ELTSSDNEMACIRCGQCAEACPVSLLPQQLQ and KCEELDLKDCIECGACAYVCPSEIPLVQYY. The [4Fe-4S] cluster site is built by cysteine 378, cysteine 381, cysteine 384, cysteine 388, cysteine 417, cysteine 420, cysteine 423, and cysteine 427. The span at 459–490 shows a compositional bias: basic and acidic residues; that stretch reads ARFEEKKARMERDKAERENRFKQAAEDRRKEM. Disordered stretches follow at residues 459–496 and 533–774; these read ARFEEKKARMERDKAERENRFKQAAEDRRKEMQQQGGS and AKQA…EEKD. The segment covering 533-545 has biased composition (low complexity); sequence AKQAEAAQSGASE. Basic and acidic residues predominate over residues 550–572; the sequence is EMAKLREERKRQARERKAQKGEV. A compositionally biased stretch (low complexity) spans 605–618; it reads TESAAQPAQATPSS. 4 stretches are compositionally biased toward polar residues: residues 645 to 658, 686 to 698, 725 to 738, and 762 to 774; these read TESTAQPAQATPSS, ESAAQPTQATPSS, TESAAQPTQATPSS, and QQSSSNLNAEEKD.

This sequence belongs to the 4Fe4S bacterial-type ferredoxin family. RnfC subfamily. As to quaternary structure, the complex is composed of six subunits: RnfA, RnfB, RnfC, RnfD, RnfE and RnfG. [4Fe-4S] cluster is required as a cofactor.

It localises to the cell inner membrane. Functionally, part of a membrane-bound complex that couples electron transfer with translocation of ions across the membrane. The sequence is that of Ion-translocating oxidoreductase complex subunit C from Vibrio cholerae serotype O1 (strain ATCC 39315 / El Tor Inaba N16961).